A 247-amino-acid chain; its full sequence is MLGNEIKVILLDIEGTTTSIGFVHHILFPYAKQNVEEYLKKEWDSDEIKQIVQDLQQVPSFEVYKATLVDSSASSITVELITGFVRYLIDKDLKVTPLKTLQGLIWANGYESGELKGHVYDDVKEAFEHWNNSGLKLAIYSSGSVAAQKLIFGYSTSGNLLPYLSAHFDTHVGHKQEKDSYINIAKSLETNPEHILFLTDIPGEADAARAAGLQAIILQRFGNAPLTDDEKSLNKIINDFSVLKVDK.

Mg(2+)-binding residues include aspartate 12 and glutamate 14. Residues 141–142 (SS) and lysine 175 contribute to the substrate site. A Mg(2+)-binding site is contributed by aspartate 200.

It belongs to the HAD-like hydrolase superfamily. MasA/MtnC family. Monomer. It depends on Mg(2+) as a cofactor.

It localises to the cytoplasm. It is found in the nucleus. It carries out the reaction 5-methylsulfanyl-2,3-dioxopentyl phosphate + H2O = 1,2-dihydroxy-5-(methylsulfanyl)pent-1-en-3-one + phosphate. It functions in the pathway amino-acid biosynthesis; L-methionine biosynthesis via salvage pathway; L-methionine from S-methyl-5-thio-alpha-D-ribose 1-phosphate: step 3/6. Its pathway is amino-acid biosynthesis; L-methionine biosynthesis via salvage pathway; L-methionine from S-methyl-5-thio-alpha-D-ribose 1-phosphate: step 4/6. Functionally, bifunctional enzyme that catalyzes the enolization of 2,3-diketo-5-methylthiopentyl-1-phosphate (DK-MTP-1-P) into the intermediate 2-hydroxy-3-keto-5-methylthiopentenyl-1-phosphate (HK-MTPenyl-1-P), which is then dephosphorylated to form the acireductone 1,2-dihydroxy-3-keto-5-methylthiopentene (DHK-MTPene). The polypeptide is Enolase-phosphatase E1 (Drosophila willistoni (Fruit fly)).